The following is a 323-amino-acid chain: Cyclin-D5-1 (323 aa).

Disordered regions lie at residues 17-36 and 281-323; these read ESSL…KQEP and HMTP…MRRL.

Belongs to the cyclin family. Cyclin D subfamily.

The protein is Cyclin-D5-1 (CYCD5-1) of Arabidopsis thaliana (Mouse-ear cress).